The primary structure comprises 281 residues: 3-deoxy-manno-octulosonate cytidylyltransferase (281 aa).

The protein belongs to the KdsB family.

The protein resides in the cytoplasm. The catalysed reaction is 3-deoxy-alpha-D-manno-oct-2-ulosonate + CTP = CMP-3-deoxy-beta-D-manno-octulosonate + diphosphate. It functions in the pathway nucleotide-sugar biosynthesis; CMP-3-deoxy-D-manno-octulosonate biosynthesis; CMP-3-deoxy-D-manno-octulosonate from 3-deoxy-D-manno-octulosonate and CTP: step 1/1. The protein operates within bacterial outer membrane biogenesis; lipopolysaccharide biosynthesis. Activates KDO (a required 8-carbon sugar) for incorporation into bacterial lipopolysaccharide in Gram-negative bacteria. The polypeptide is 3-deoxy-manno-octulosonate cytidylyltransferase (Xanthomonas campestris pv. campestris (strain B100)).